A 213-amino-acid polypeptide reads, in one-letter code: ER lumen protein-retaining receptor (213 aa).

The Lumenal segment spans residues 1-2; the sequence is MN. The chain crosses the membrane as a helical span at residues 3–21; it reads IFRITADLAHAVAIVILLL. At 22 to 35 the chain is on the cytoplasmic side; sequence KIWKSRSCEGISGR. Residues 36–53 traverse the membrane as a helical segment; it reads SQILFAVTFFTRYLDLFT. Residues 54–61 are Lumenal-facing; it reads SFYSLYNT. A helical membrane pass occupies residues 62–80; that stretch reads VMKVLFLAGSIGTVYLMWV. Residues 81–96 lie on the Cytoplasmic side of the membrane; it reads KFKATYDRNNDTFRIE. The chain crosses the membrane as a helical span at residues 97–110; it reads FLVIPSIILALIIN. The Lumenal segment spans residues 111 to 117; the sequence is HEFMFME. Residues 118-137 traverse the membrane as a helical segment; sequence VMWTFSIYLEAVAIMPQLFM. Topologically, residues 138–149 are cytoplasmic; it reads LSRTGNAETITA. A helical transmembrane segment spans residues 150–168; it reads HYLFALGSYRFLYIFNWVY. The Lumenal segment spans residues 169-178; that stretch reads RYYTESFFDP. The chain crosses the membrane as a helical span at residues 179-199; the sequence is IAVVAGIVQTVLYADFFYLYI. Residues 200 to 213 lie on the Cytoplasmic side of the membrane; it reads TRVIQSNRQFEMSA.

The protein belongs to the ERD2 family.

The protein resides in the endoplasmic reticulum membrane. Required for the retention of luminal endoplasmic reticulum proteins. Determines the specificity of the luminal ER protein retention system. Also required for normal vesicular traffic through the Golgi. The chain is ER lumen protein-retaining receptor (erd-2.1) from Caenorhabditis briggsae.